The chain runs to 436 residues: MSDRQQVKNARGERIAIVAGLRTPFAKQATAFHGVSALDMGKMVVNELISRSELDPKLIEQLVYGQVVLMPAAPNIAREIVLGTGMNVSTDAYSVTRACATSFQSAVNVAESIMTGNVEIGIAGGADSSSVLPITVSKKLAHALVDLNKARTLGQKFAIMRRLGLKDLMPVPPAVAEYSTGLSMGQTAEQMAKTYGISRADQDALAHRSHTLATETWNSGNLRDEVMTAHVAPYKQFIDRDNNIRENSVLESYAKLRPAFDRKHGSVTAANSTPLTDGASAIILMSEGRAKALGYQPIGYIKSYAFTAIDVWQDMLMGPSYATPLALKRAGMELEDLTLIEMHEAFAAQTLANMQMFGSKKFAAEKLGRNRAIGDIDMSKFNVLGGSLAYGHPFAATGTRLITQVCRELKRRGGGTGLATACAAGGLGAAMIVEVE.

Catalysis depends on Cys99, which acts as the Acyl-thioester intermediate. Catalysis depends on proton acceptor residues His392 and Cys422.

This sequence belongs to the thiolase-like superfamily. Thiolase family. As to quaternary structure, heterotetramer of two alpha chains (FadJ) and two beta chains (FadI).

It localises to the cytoplasm. The catalysed reaction is an acyl-CoA + acetyl-CoA = a 3-oxoacyl-CoA + CoA. The protein operates within lipid metabolism; fatty acid beta-oxidation. Catalyzes the final step of fatty acid oxidation in which acetyl-CoA is released and the CoA ester of a fatty acid two carbons shorter is formed. The polypeptide is 3-ketoacyl-CoA thiolase (Shewanella denitrificans (strain OS217 / ATCC BAA-1090 / DSM 15013)).